Reading from the N-terminus, the 179-residue chain is Large ribosomal subunit protein uL10 (179 aa).

Belongs to the universal ribosomal protein uL10 family. As to quaternary structure, part of the ribosomal stalk of the 50S ribosomal subunit. The N-terminus interacts with L11 and the large rRNA to form the base of the stalk. The C-terminus forms an elongated spine to which L12 dimers bind in a sequential fashion forming a multimeric L10(L12)X complex.

Functionally, forms part of the ribosomal stalk, playing a central role in the interaction of the ribosome with GTP-bound translation factors. This is Large ribosomal subunit protein uL10 from Kosmotoga olearia (strain ATCC BAA-1733 / DSM 21960 / TBF 19.5.1).